The following is a 296-amino-acid chain: D-alanine--D-alanine ligase (296 aa).

One can recognise an ATP-grasp domain in the interval 103 to 293 (KEILMHYRMP…FDSFVKRIIE (191 aa)). Residue 129–180 (ISFPVAVKPSSGGSSIATFKVKSIQELKHAYEEASKYGEVMIEQWVTGKEIT) participates in ATP binding. Mg(2+)-binding residues include Asp247, Glu260, and Asn262.

Belongs to the D-alanine--D-alanine ligase family. The cofactor is Mg(2+). Mn(2+) serves as cofactor.

It is found in the cytoplasm. The catalysed reaction is 2 D-alanine + ATP = D-alanyl-D-alanine + ADP + phosphate + H(+). It participates in cell wall biogenesis; peptidoglycan biosynthesis. Functionally, cell wall formation. This is D-alanine--D-alanine ligase from Francisella tularensis subsp. tularensis (strain WY96-3418).